The chain runs to 244 residues: Ferric aerobactin reductase IutB (244 aa).

Residues C220, C221, C232, and C235 each coordinate [2Fe-2S] cluster.

Monomer. It depends on [2Fe-2S] cluster as a cofactor.

The protein localises to the cytoplasm. The enzyme catalyses 2 a Fe(II)-siderophore + NAD(+) + H(+) = 2 a Fe(III)-siderophore + NADH. The catalysed reaction is 2 a Fe(II)-siderophore + NADP(+) + H(+) = 2 a Fe(III)-siderophore + NADPH. Its function is as follows. Ferric-siderophore reductase involved in iron removal from the siderophores after their transport into the cell. Acts as a major ferric-aerobactin reductase catalyzing the reduction of Fe(3+)-aerobactin, a citrate-hydroxamate siderophore produced by other bacteria. Catalyzes reduction of Fe(3+)-vulnibactin, a catecholate siderophore synthesized by V.vulnificus, in the absence of VuuB. Catalyzes reduction of ferrioxamine B and Fe(3+)-vibriobactin in vitro. No activity with Fe(3+)-enterobactin. Catalyzes reduction of ferric chelating compound Fe(3+)-nitrilotriacetic acid (NTA) in the presence of NADH, NADPH or reduced glutathione (GSH) as its electron donor in vitro. Also catalyzes reduction of ferric chelating compounds Fe(3+)-citrate and Fe(3+)-EDTA as well as non-complexed FeCl3 in the presence of GSH as its electron donor in vitro. Highest activity with Fe(3+)-NTA as electron acceptor and GSH as donor. This Vibrio vulnificus protein is Ferric aerobactin reductase IutB.